The sequence spans 72 residues: DNA-directed RNA polymerase subunit omega (72 aa).

Belongs to the RNA polymerase subunit omega family. As to quaternary structure, the RNAP catalytic core consists of 2 alpha, 1 beta, 1 beta' and 1 omega subunit. When a sigma factor is associated with the core the holoenzyme is formed, which can initiate transcription.

The enzyme catalyses RNA(n) + a ribonucleoside 5'-triphosphate = RNA(n+1) + diphosphate. Its function is as follows. Promotes RNA polymerase assembly. Latches the N- and C-terminal regions of the beta' subunit thereby facilitating its interaction with the beta and alpha subunits. The sequence is that of DNA-directed RNA polymerase subunit omega from Clostridium botulinum (strain Langeland / NCTC 10281 / Type F).